Reading from the N-terminus, the 491-residue chain is Neuronal acetylcholine receptor subunit beta-2 (491 aa).

The first 18 residues, 1 to 18 (MALLRVLCLLAALRRSLC), serve as a signal peptide directing secretion. Over 19 to 226 (TDTEERLVEY…ITYDFIIRRK (208 aa)) the chain is Extracellular. Asn-44 and Asn-161 each carry an N-linked (GlcNAc...) asparagine glycan. Cysteines 148 and 162 form a disulfide. A helical membrane pass occupies residues 227–251 (PLFYTINLIIPCILITSLAILVFYL). Over 252–258 (PSDCGEK) the chain is Cytoplasmic. A helical transmembrane segment spans residues 259 to 277 (MTLCISVLLALTVFLLLIS). Residues 278–292 (KIVPPTSLDVPLVGK) are Extracellular-facing. The helical transmembrane segment at 293–314 (YLMFTMVLVTFSIVTSVCVLNV) threads the bilayer. Topologically, residues 315 to 449 (HHRSPTTHTM…WKYVAMVIDR (135 aa)) are cytoplasmic. Residues 450–468 (LFLWIFVFVCVFGTVGMFL) form a helical membrane-spanning segment.

The protein belongs to the ligand-gated ion channel (TC 1.A.9) family. Acetylcholine receptor (TC 1.A.9.1) subfamily. Beta-2/CHRNB2 sub-subfamily. Neuronal AChR is a heteropentamer composed of two different types of subunits: alpha and beta. CHRNB2/Beta-2 subunit can be combined to CHRNA2/alpha-2, CHRNA3/alpha-3 or CHRNA4/alpha-4, CHRNA5/alpha-5, CHRNA6/alpha-6 and CHRNB3/beta-3 to give rise to functional receptors.

It localises to the synaptic cell membrane. Its subcellular location is the cell membrane. The catalysed reaction is Ca(2+)(in) = Ca(2+)(out). It carries out the reaction K(+)(in) = K(+)(out). It catalyses the reaction Na(+)(in) = Na(+)(out). Its activity is regulated as follows. Activated by a myriad of ligands such as acetylcholine, cytisine, nicotine, choline and epibatidine. nAChR activity is inhibited by the antagonist alpha-conotoxins BuIA, PnIA, PnIC, GID and MII, small disulfide-constrained peptides from cone snails. Functionally, component of neuronal acetylcholine receptors (nAChRs) that function as pentameric, ligand-gated cation channels with high calcium permeability among other activities. nAChRs are excitatory neurotrasnmitter receptors formed by a collection of nAChR subunits known to mediate synaptic transmission in the nervous system and the neuromuscular junction. Each nAchR subunit confers differential attributes to channel properties, including activation, deactivation and desensitization kinetics, pH sensitivity, cation permeability, and binding to allosteric modulators. CHRNB2 forms heteropentameric neuronal acetylcholine receptors with CHRNA2, CHRNA3, CHRNA4 and CHRNA6, as well as CHRNA5 and CHRNB3 as accesory subunits. The protein is Neuronal acetylcholine receptor subunit beta-2 (CHRNB2) of Gallus gallus (Chicken).